The following is a 226-amino-acid chain: N-acetyltransferase family 8 member 2 (226 aa).

2 helical membrane-spanning segments follow: residues 33–55 (FYHVLTLPHSLLLFPGVPVTIIL) and 60–82 (WLLATVYSFLFLLCLRLIFWVSC). Residues 69-221 (LFLLCLRLIF…FHFTYSLPSV (153 aa)) enclose the N-acetyltransferase domain. At lysine 204 the chain carries N6-acetyllysine.

This sequence belongs to the camello family.

It is found in the membrane. Its function is as follows. Probable acetyltransferase. Has no detectable histone acetyltransferase activity towards histone H3 or H4. The sequence is that of N-acetyltransferase family 8 member 2 from Rattus norvegicus (Rat).